A 183-amino-acid chain; its full sequence is dCTP deaminase (183 aa).

DCTP-binding positions include 97–102 (RSSFAR) and Asp-113. Glu-123 serves as the catalytic Proton donor/acceptor. Residues Tyr-155 and Gln-162 each contribute to the dCTP site.

It belongs to the dCTP deaminase family. Homotrimer.

It catalyses the reaction dCTP + H2O + H(+) = dUTP + NH4(+). The protein operates within pyrimidine metabolism; dUMP biosynthesis; dUMP from dCTP (dUTP route): step 1/2. Its function is as follows. Catalyzes the deamination of dCTP to dUTP. The sequence is that of dCTP deaminase from Sulfurisphaera tokodaii (strain DSM 16993 / JCM 10545 / NBRC 100140 / 7) (Sulfolobus tokodaii).